A 178-amino-acid chain; its full sequence is Ribosome maturation factor RimP (178 aa).

The protein belongs to the RimP family.

It localises to the cytoplasm. Its function is as follows. Required for maturation of 30S ribosomal subunits. The protein is Ribosome maturation factor RimP of Streptococcus pyogenes serotype M18 (strain MGAS8232).